Reading from the N-terminus, the 583-residue chain is Glycine--tRNA ligase (583 aa).

Arg-100 and Glu-166 together coordinate substrate. ATP is bound by residues 198 to 200 (RNE), 208 to 213 (VRLREF), 328 to 329 (EV), and 443 to 446 (GTDR). Residue 213–217 (FTIME) participates in substrate binding. Residue 439–443 (EPSFG) participates in substrate binding.

The protein belongs to the class-II aminoacyl-tRNA synthetase family.

The protein resides in the cytoplasm. It carries out the reaction tRNA(Gly) + glycine + ATP = glycyl-tRNA(Gly) + AMP + diphosphate. Functionally, catalyzes the attachment of glycine to tRNA(Gly). This is Glycine--tRNA ligase from Aeropyrum pernix (strain ATCC 700893 / DSM 11879 / JCM 9820 / NBRC 100138 / K1).